The following is a 189-amino-acid chain: Probable nicotinate-nucleotide adenylyltransferase (189 aa).

It belongs to the NadD family.

The catalysed reaction is nicotinate beta-D-ribonucleotide + ATP + H(+) = deamido-NAD(+) + diphosphate. It participates in cofactor biosynthesis; NAD(+) biosynthesis; deamido-NAD(+) from nicotinate D-ribonucleotide: step 1/1. In terms of biological role, catalyzes the reversible adenylation of nicotinate mononucleotide (NaMN) to nicotinic acid adenine dinucleotide (NaAD). This Cereibacter sphaeroides (strain ATCC 17023 / DSM 158 / JCM 6121 / CCUG 31486 / LMG 2827 / NBRC 12203 / NCIMB 8253 / ATH 2.4.1.) (Rhodobacter sphaeroides) protein is Probable nicotinate-nucleotide adenylyltransferase.